Consider the following 436-residue polypeptide: UPF0597 protein YhaM (436 aa).

It belongs to the UPF0597 family.

The chain is UPF0597 protein YhaM from Escherichia coli (strain K12 / MC4100 / BW2952).